Here is a 320-residue protein sequence, read N- to C-terminus: Malate dehydrogenase (320 aa).

NAD(+) contacts are provided by residues 10-15 (GSGMIG) and Asp-34. Residues Arg-83 and Arg-89 each contribute to the substrate site. NAD(+) contacts are provided by residues Asn-96 and 119 to 121 (ITN). 2 residues coordinate substrate: Asn-121 and Arg-152. Residue His-176 is the Proton acceptor of the active site.

This sequence belongs to the LDH/MDH superfamily. MDH type 3 family.

It carries out the reaction (S)-malate + NAD(+) = oxaloacetate + NADH + H(+). Functionally, catalyzes the reversible oxidation of malate to oxaloacetate. The protein is Malate dehydrogenase of Brucella suis (strain ATCC 23445 / NCTC 10510).